The following is a 388-amino-acid chain: Serine/threonine-protein phosphatase sitA (388 aa).

2 residues coordinate Mn(2+): D67 and H69. Positions 86 to 146 are disordered; that stretch reads PDGSEAEAPK…SQRDRSSSSG (61 aa). Mn(2+) contacts are provided by D161 and N193. Residue H194 is the Proton donor of the active site. H243 and H317 together coordinate Mn(2+).

The protein belongs to the PPP phosphatase family. PP-6 (PP-V) subfamily. Mn(2+) serves as cofactor.

The enzyme catalyses O-phospho-L-threonyl-[protein] + H2O = L-threonyl-[protein] + phosphate. In terms of biological role, protein phosphatase that acts as a modulator of pkcA/mpkA activity involved in the cell wall integrity pathway. Plays an important role in regulation of adhesion, cell wall integrity, biofilm formation, and virulence. This is Serine/threonine-protein phosphatase sitA from Aspergillus fumigatus (strain ATCC MYA-4609 / CBS 101355 / FGSC A1100 / Af293) (Neosartorya fumigata).